The chain runs to 247 residues: DNA polymerase sliding clamp (247 aa).

The protein belongs to the PCNA family. Homotrimer. The subunits circularize to form a toroid; DNA passes through its center. Replication factor C (RFC) is required to load the toroid on the DNA.

Its function is as follows. Sliding clamp subunit that acts as a moving platform for DNA processing. Responsible for tethering the catalytic subunit of DNA polymerase and other proteins to DNA during high-speed replication. This is DNA polymerase sliding clamp from Methanosphaerula palustris (strain ATCC BAA-1556 / DSM 19958 / E1-9c).